The chain runs to 456 residues: F-box/FBD/LRR-repeat protein At1g13780 (456 aa).

Positions 9 to 55 (FDRISELPESLISQILLHLPTKASVKTSVLSTRWKNLWLNVPGLDLN) constitute an F-box domain. LRR repeat units follow at residues 197-220 (LEEL…SLKR), 243-266 (APGL…NLTS), 302-325 (ISSV…SKVG), and 355-379 (FPNL…ELVN). Positions 372–424 (MEKFELVNVPRCFVSTLEHVEIKGLFDWGEQDMKIASYFLENSAVLKKLILSF) constitute an FBD domain.

The sequence is that of F-box/FBD/LRR-repeat protein At1g13780 from Arabidopsis thaliana (Mouse-ear cress).